The sequence spans 147 residues: Cytochrome c' (147 aa).

A signal peptide spans 1–21 (MKRMMIVAALAALTTTTVAQA). Positions 31, 87, 88, 137, 140, and 141 each coordinate heme c.

Homodimer. Binds 1 heme c group covalently per subunit.

In terms of biological role, cytochrome c' is the most widely occurring bacterial c-type cytochrome. Cytochromes c' are high-spin proteins and the heme has no sixth ligand. Their exact function is not known. This Rhodospirillum rubrum (strain ATCC 11170 / ATH 1.1.1 / DSM 467 / LMG 4362 / NCIMB 8255 / S1) protein is Cytochrome c'.